Consider the following 130-residue polypeptide: MSRPTGPQFWPPFKPCPCGSGRSYAACCQPFHTGERDAPTPEALMRSRYAAYALADADYVRRTWHPDTVPAELDLNDGVKYTGLRIHRAEGDEVEFTASMKGPDGQPHNMRERSRFVQLDGRWVYLDAAE.

It belongs to the UPF0225 family.

This Deinococcus radiodurans (strain ATCC 13939 / DSM 20539 / JCM 16871 / CCUG 27074 / LMG 4051 / NBRC 15346 / NCIMB 9279 / VKM B-1422 / R1) protein is UPF0225 protein DR_0483.